A 630-amino-acid chain; its full sequence is PR domain zinc finger protein 5 (630 aa).

In terms of domain architecture, SET spans 8–124; it reads DRFSLKSSRV…TDTELLIGYL (117 aa). Residues 167 to 190 form a C2H2-type 1 zinc finger; the sequence is YACPQCESSFTSEDILAEHLQTLH. The segment at 199–221 adopts a C2H2-type 2; atypical zinc-finger fold; the sequence is FKCKNCGKKFPVKQALQRHVLQC. A C2H2-type 3; atypical zinc finger spans residues 234–256; sequence FQCSVCNSSFSSASSFEQHQETC. C2H2-type zinc fingers lie at residues 262-287, 295-317, 320-342, 348-370, 376-398, 404-426, 432-455, 461-483, 489-511, 517-539, 545-567, 573-595, and 602-625; these read FVCKADSCGKRLKSKDALKRHQENVH, LICSVCNKKCSSASSLQEHRKIH, FDCQECMKKFISANQLKRHMITH, YNCEICNKSFKRLDQVGAHKVIH, YKCKLCGKGFAHRNVYKNHKKTH, FQCEECKALFRTPFSLQRHLLIH, FKCHHCDATFKRKDTLNVHVQVVH, YRCELCNKAFVTPSVLRSHKKTH, KICPYCGQKFASSGTLRVHIRSH, YQCPYCEKGFSKNDGLKMHIRTH, YKCSECSKAFSQKRGLDEHKRTH, FQCDVCDLAFSLKKMLIRHKMTH, and AECQFCHKKFTRNDYLKVHMDNIH.

Belongs to the class V-like SAM-binding methyltransferase superfamily. In terms of assembly, interacts with EHMT2/G9A, GFI1 and HDAC1. Widely expressed with highest levels in colon and ovary. Tends to be silenced in breast, colorectal, gastric and liver cancer tissues.

Its subcellular location is the nucleus. Sequence-specific DNA-binding transcription factor. Represses transcription at least in part by recruitment of the histone methyltransferase EHMT2/G9A and histone deacetylases such as HDAC1. Regulates hematopoiesis-associated protein-coding and microRNA (miRNA) genes. May regulate the expression of proteins involved in extracellular matrix development and maintenance, including fibrillar collagens, such as COL4A1 and COL11A1, connective tissue components, such as HAPLN1, and molecules regulating cell migration and adhesion, including EDIL3 and TGFB2. May cause G2/M arrest and apoptosis in cancer cells. The polypeptide is PR domain zinc finger protein 5 (PRDM5) (Homo sapiens (Human)).